The primary structure comprises 717 residues: RNA helicase NPH-II (717 aa).

The Helicase ATP-binding domain maps to 193–384 (FEIFISKKNC…IYFKNIVEIY (192 aa)). 206 to 213 (GGTGIGKT) contributes to the ATP binding site. Residues 331 to 334 (DEIH) carry the DEXH box motif. A Helicase C-terminal domain is found at 406–566 (ILKNYMPSVG…VFKYNNMDYY (161 aa)).

The protein belongs to the DEAD box helicase family. DEAH subfamily. In terms of assembly, monomer.

Its subcellular location is the virion. The catalysed reaction is ATP + H2O = ADP + phosphate + H(+). NTP-dependent helicase that catalyzes unidirectional unwinding of 3'tailed duplex RNAs and plays an important role during transcription of early mRNAs, presumably by preventing R-loop formation behind the elongating RNA polymerase. Might also play a role in the export of newly synthesized mRNA chains out of the core into the cytoplasm. Required for replication and propagation of viral particles. The sequence is that of RNA helicase NPH-II (NPH2) from Melanoplus sanguinipes (Migratory grasshopper).